The following is a 268-amino-acid chain: MTEAGPAQAGPFRYTLAMHPIQVIERGREDYQPCFDAMRAFTAARTPETPDQVWLVEHPPVYTLGQAGDPAHLLAPDDRIPVVQIDRGGQITYHGPGQVVAYLLLDLRRRRLMVRELVHGIEQAVLDTLAAYNLAAERKPGAPGIYLSDGPHQGAKIAALGLKIRNGCSYHGVSLNVQMDLSPFLRINPCGYAGLETVDMASAGATFAAADANGAPLPVTAAQQPEIALRLAAALCEVLAAHEARALAAEGTAAPAEAKQPGETALAS.

Residues 47-243 form the BPL/LPL catalytic domain; sequence PETPDQVWLV…ALCEVLAAHE (197 aa). Substrate-binding positions include 87 to 94, 159 to 161, and 172 to 174; these read RGGQITYH, ALG, and GVS. Catalysis depends on Cys190, which acts as the Acyl-thioester intermediate.

The protein belongs to the LipB family.

It localises to the cytoplasm. The enzyme catalyses octanoyl-[ACP] + L-lysyl-[protein] = N(6)-octanoyl-L-lysyl-[protein] + holo-[ACP] + H(+). The protein operates within protein modification; protein lipoylation via endogenous pathway; protein N(6)-(lipoyl)lysine from octanoyl-[acyl-carrier-protein]: step 1/2. Catalyzes the transfer of endogenously produced octanoic acid from octanoyl-acyl-carrier-protein onto the lipoyl domains of lipoate-dependent enzymes. Lipoyl-ACP can also act as a substrate although octanoyl-ACP is likely to be the physiological substrate. This chain is Octanoyltransferase, found in Cupriavidus necator (strain ATCC 17699 / DSM 428 / KCTC 22496 / NCIMB 10442 / H16 / Stanier 337) (Ralstonia eutropha).